The sequence spans 906 residues: Serine-aspartate repeat-containing protein C (906 aa).

The first 50 residues, 1–50 (MNNKKTATNRKGMIPNRLNKFSIRKYSVGTASILVGTTLIFGLSGHEAKA), serve as a signal peptide directing secretion. The disordered stretch occupies residues 51–127 (AEHTNGELNQ…QPTKKNNDAT (77 aa)). The tract at residues 51–486 (AEHTNGELNQ…GSSTANGDQK (436 aa)) is ligand binding A region. 2 stretches are compositionally biased toward polar residues: residues 56–71 (GELNQSKNEATAPSEN) and 80–119 (RQQNNVEQSTTSNQPKVNESDNTSVKETTEEPQNTTSTQP). 2 CNA-B domains span residues 487-597 (KYNL…YKTP) and 598-708 (KYSL…EEET). The tract at residues 669–881 (KQTGTNTTED…TGSENNGSNN (213 aa)) is disordered. Composition is skewed to acidic residues over residues 676–686 (TEDDKDADGGE) and 703–845 (YFEE…DSDS). The short motif at 869–873 (LPETG) is the LPXTG sorting signal element. Threonine 872 carries the pentaglycyl murein peptidoglycan amidated threonine modification. The propeptide at 873 to 906 (GSENNGSNNATLFGGLFAALGSLLLFGRRKKQNK) is removed by sortase.

Belongs to the serine-aspartate repeat-containing protein (SDr) family. In terms of assembly, homodimerizes; via N2-Domain. Interacts with host NRXN1; this interaction mediates bacterial attachment to host cells.

It is found in the secreted. Its subcellular location is the cell wall. In terms of biological role, cell surface-associated calcium-binding protein which plays an important role in adhesion and pathogenesis. Mediates interactions with components of the extracellular matrix such as host NRXN1 to promote bacterial adhesion. This chain is Serine-aspartate repeat-containing protein C (sdrC), found in Staphylococcus aureus (strain MRSA252).